Reading from the N-terminus, the 466-residue chain is Asparagine--tRNA ligase (466 aa).

The protein belongs to the class-II aminoacyl-tRNA synthetase family. In terms of assembly, homodimer.

The protein resides in the cytoplasm. It carries out the reaction tRNA(Asn) + L-asparagine + ATP = L-asparaginyl-tRNA(Asn) + AMP + diphosphate + H(+). The chain is Asparagine--tRNA ligase from Shewanella putrefaciens (strain CN-32 / ATCC BAA-453).